The primary structure comprises 216 residues: Thiopurine S-methyltransferase (216 aa).

S-adenosyl-L-methionine-binding residues include Trp-11, Leu-46, Glu-67, and Arg-122.

Belongs to the class I-like SAM-binding methyltransferase superfamily. TPMT family.

Its subcellular location is the cytoplasm. The catalysed reaction is S-adenosyl-L-methionine + a thiopurine = S-adenosyl-L-homocysteine + a thiopurine S-methylether.. This chain is Thiopurine S-methyltransferase, found in Vibrio parahaemolyticus serotype O3:K6 (strain RIMD 2210633).